Consider the following 238-residue polypeptide: Ribosome-recycling factor, mitochondrial (238 aa).

It belongs to the RRF family.

It localises to the mitochondrion. Its function is as follows. Responsible for the release of ribosomes from messenger RNA at the termination of protein biosynthesis. May increase the efficiency of translation by recycling ribosomes from one round of translation to another. This is Ribosome-recycling factor, mitochondrial from Caenorhabditis elegans.